Reading from the N-terminus, the 155-residue chain is Small ribosomal subunit protein bS6 (155 aa).

The disordered stretch occupies residues glutamate 94–valine 155.

This sequence belongs to the bacterial ribosomal protein bS6 family.

Binds together with bS18 to 16S ribosomal RNA. This Rhizobium johnstonii (strain DSM 114642 / LMG 32736 / 3841) (Rhizobium leguminosarum bv. viciae) protein is Small ribosomal subunit protein bS6.